Reading from the N-terminus, the 196-residue chain is Putative tyrosine-protein phosphatase OCA1 (196 aa).

The Tyrosine-protein phosphatase domain maps to 33–192; it reads NFCPVEKQLY…SVQIDPTKMP (160 aa). The Phosphocysteine intermediate role is filled by Cys130.

This sequence belongs to the protein-tyrosine phosphatase family.

It localises to the cytoplasm. The enzyme catalyses O-phospho-L-tyrosyl-[protein] + H2O = L-tyrosyl-[protein] + phosphate. In terms of biological role, putative tyrosine-protein phosphatase required for protection against superoxide stress. This chain is Putative tyrosine-protein phosphatase OCA1 (OCA1), found in Debaryomyces hansenii (strain ATCC 36239 / CBS 767 / BCRC 21394 / JCM 1990 / NBRC 0083 / IGC 2968) (Yeast).